A 363-amino-acid chain; its full sequence is S-adenosylmethionine decarboxylase proenzyme (363 aa).

Catalysis depends on residues glutamate 9 and glutamate 12. Serine 69 (schiff-base intermediate with substrate; via pyruvic acid) is an active-site residue. Serine 69 carries the post-translational modification Pyruvic acid (Ser); by autocatalysis. The active-site Proton donor; for catalytic activity is the cysteine 83. Catalysis depends on proton acceptor; for processing activity residues serine 232 and histidine 245.

It belongs to the eukaryotic AdoMetDC family. Requires pyruvate as cofactor. Is synthesized initially as an inactive proenzyme. Formation of the active enzyme involves a self-maturation process in which the active site pyruvoyl group is generated from an internal serine residue via an autocatalytic post-translational modification. Two non-identical subunits are generated from the proenzyme in this reaction, and the pyruvate is formed at the N-terminus of the alpha chain, which is derived from the carboxyl end of the proenzyme. The post-translation cleavage follows an unusual pathway, termed non-hydrolytic serinolysis, in which the side chain hydroxyl group of the serine supplies its oxygen atom to form the C-terminus of the beta chain, while the remainder of the serine residue undergoes an oxidative deamination to produce ammonia and the pyruvoyl group blocking the N-terminus of the alpha chain.

It catalyses the reaction S-adenosyl-L-methionine + H(+) = S-adenosyl 3-(methylsulfanyl)propylamine + CO2. It participates in amine and polyamine biosynthesis; S-adenosylmethioninamine biosynthesis; S-adenosylmethioninamine from S-adenosyl-L-methionine: step 1/1. This chain is S-adenosylmethionine decarboxylase proenzyme (SAMDC), found in Spinacia oleracea (Spinach).